Consider the following 122-residue polypeptide: Large ribosomal subunit protein uL14c (122 aa).

Belongs to the universal ribosomal protein uL14 family. As to quaternary structure, part of the 50S ribosomal subunit.

It is found in the plastid. The protein resides in the chloroplast. Its function is as follows. Binds to 23S rRNA. This Adiantum capillus-veneris (Maidenhair fern) protein is Large ribosomal subunit protein uL14c.